The primary structure comprises 485 residues: Aspartyl/glutamyl-tRNA(Asn/Gln) amidotransferase subunit B (485 aa).

It belongs to the GatB/GatE family. GatB subfamily. In terms of assembly, heterotrimer of A, B and C subunits.

It catalyses the reaction L-glutamyl-tRNA(Gln) + L-glutamine + ATP + H2O = L-glutaminyl-tRNA(Gln) + L-glutamate + ADP + phosphate + H(+). It carries out the reaction L-aspartyl-tRNA(Asn) + L-glutamine + ATP + H2O = L-asparaginyl-tRNA(Asn) + L-glutamate + ADP + phosphate + 2 H(+). Allows the formation of correctly charged Asn-tRNA(Asn) or Gln-tRNA(Gln) through the transamidation of misacylated Asp-tRNA(Asn) or Glu-tRNA(Gln) in organisms which lack either or both of asparaginyl-tRNA or glutaminyl-tRNA synthetases. The reaction takes place in the presence of glutamine and ATP through an activated phospho-Asp-tRNA(Asn) or phospho-Glu-tRNA(Gln). The sequence is that of Aspartyl/glutamyl-tRNA(Asn/Gln) amidotransferase subunit B from Cupriavidus pinatubonensis (strain JMP 134 / LMG 1197) (Cupriavidus necator (strain JMP 134)).